A 248-amino-acid polypeptide reads, in one-letter code: Killer cell lectin-like receptor subfamily I member 1 (248 aa).

Over 1–80 the chain is Cytoplasmic; that stretch reads MLHSKRREYT…RQGPKSTVWR (80 aa). 2 consecutive short sequence motifs (ITIM motif) follow at residues 16–21 and 47–52; these read VTYTEL and LKYGEL. A helical; Signal-anchor for type II membrane protein membrane pass occupies residues 81-101; the sequence is VVTGMLGALCVVLMTTTGILL. Residues 102-248 are Extracellular-facing; it reads PKLFSSQEEQ…KKSYICEFNI (147 aa). 3 disulfide bridges follow: Cys-132-Cys-145, Cys-161-Cys-244, and Cys-223-Cys-236. A C-type lectin domain is found at 139–245; that stretch reads FGNNFYCVFK…CSAKKSYICE (107 aa). Asn-197, Asn-214, and Asn-220 each carry an N-linked (GlcNAc...) asparagine glycan.

In terms of assembly, heterodimer with KLRE1. Interacts with PTPN6. As to expression, expressed in natural killer (NK) cells.

It localises to the cell membrane. Functionally, lectin-like receptor for natural killer (NK) cells. Heterodimer formation with KLRE1 mediates inhibition of NK cell cytolytic activity. The polypeptide is Killer cell lectin-like receptor subfamily I member 1 (Mus musculus (Mouse)).